Reading from the N-terminus, the 351-residue chain is Dysbindin (351 aa).

The stretch at 106 to 179 (FLADLECLTA…AELDAEHAQK (74 aa)) forms a coiled coil. Residues 291–325 (RHKLSSLSSTCTDSASQEASEGESPVVQSDEEEVQ) are disordered. Residues 295–306 (SSLSSTCTDSAS) show a composition bias toward low complexity.

Belongs to the dysbindin family. Component of the biogenesis of lysosome-related organelles complex 1 (BLOC-1).

The protein resides in the cytoplasm. It is found in the cytoplasmic vesicle membrane. The protein localises to the cytoplasmic vesicle. It localises to the secretory vesicle. Its subcellular location is the synaptic vesicle membrane. The protein resides in the endosome membrane. It is found in the melanosome membrane. The protein localises to the nucleus. It localises to the postsynaptic density. Its subcellular location is the endoplasmic reticulum. Its function is as follows. Component of the BLOC-1 complex, a complex that is required for normal biogenesis of lysosome-related organelles (LRO), such as platelet dense granules and melanosomes. Plays a role in intracellular vesicle trafficking. Plays a role in synaptic vesicle trafficking and in neurotransmitter release. May be required for normal dopamine homeostasis in the cerebral cortex, hippocampus, and hypothalamus. Plays a role in the regulation of cell surface exposure of DRD2. Contributes to the regulation of dopamine signaling. May play a role in actin cytoskeleton reorganization and neurite outgrowth. In Gallus gallus (Chicken), this protein is Dysbindin (DTNBP1).